We begin with the raw amino-acid sequence, 207 residues long: Urease accessory protein UreG (207 aa).

16 to 23 (GPVGSGKT) lines the GTP pocket.

It belongs to the SIMIBI class G3E GTPase family. UreG subfamily. In terms of assembly, homodimer. UreD, UreF and UreG form a complex that acts as a GTP-hydrolysis-dependent molecular chaperone, activating the urease apoprotein by helping to assemble the nickel containing metallocenter of UreC. The UreE protein probably delivers the nickel.

The protein localises to the cytoplasm. Its function is as follows. Facilitates the functional incorporation of the urease nickel metallocenter. This process requires GTP hydrolysis, probably effectuated by UreG. This is Urease accessory protein UreG from Blochmanniella pennsylvanica (strain BPEN).